The primary structure comprises 36 residues: Photosystem I reaction center subunit VIII (36 aa).

The chain crosses the membrane as a helical span at residues S8 to L28.

This sequence belongs to the PsaI family.

The protein localises to the plastid. The protein resides in the chloroplast thylakoid membrane. Functionally, may help in the organization of the PsaL subunit. In Daucus carota (Wild carrot), this protein is Photosystem I reaction center subunit VIII.